Consider the following 725-residue polypeptide: ATP-dependent DNA helicase II subunit 2 (725 aa).

Residues 232 to 478 (LTLGDPQKYP…QQAMSDYVDA (247 aa)) enclose the Ku domain.

The protein belongs to the ku80 family. In terms of assembly, heterodimer of mus-51/ku70 and mus-52/ku80.

The protein resides in the nucleus. It localises to the chromosome. It is found in the telomere. The catalysed reaction is ATP + H2O = ADP + phosphate + H(+). Functionally, single-stranded DNA-dependent ATP-dependent helicase. Involved in non-homologous end joining (NHEJ) DNA double strand break repair. DNA-binding is sequence-independent but has a high affinity to nicks in double-stranded DNA and to the ends of duplex DNA. Binds to naturally occurring chromosomal ends, and therefore provides chromosomal end protection. Required also for telomere recombination to repair telomeric ends in the absence of telomerase. ku70, of the ku70/ku80 heterodimer, binds to the stem loop of tlc1, the RNA component of telomerase. Involved in telomere maintenance. Interacts with telomeric repeats and subtelomeric sequences thereby controlling telomere length and protecting against subtelomeric rearrangement. Maintains telomeric chromatin, which is involved in silencing the expression of genes located at the telomere. Required for mating-type switching. This is ATP-dependent DNA helicase II subunit 2 (mus-52) from Neurospora crassa (strain ATCC 24698 / 74-OR23-1A / CBS 708.71 / DSM 1257 / FGSC 987).